A 172-amino-acid polypeptide reads, in one-letter code: Myosin regulatory light chain RLC-A (172 aa).

Residues 1–16 (MSSKRAKTKTTKKRPQ) show a composition bias toward basic residues. The tract at residues 1–20 (MSSKRAKTKTTKKRPQRATS) is disordered. A Phosphothreonine; by MLCK modification is found at Thr-19. Ser-20 is subject to Phosphoserine; by MLCK. 3 EF-hand domains span residues 29 to 64 (SQIQEFKEAFNMIDQNRDGFIDKEDLHDMLASMGKN), 98 to 133 (DPEDVIRNAFACFDEEAIGTIQEDYLRELLTTMGDR), and 134 to 169 (FTDEEVDELYREAPIDKKGNFNYIEFTRILKHGAKD). The Ca(2+) site is built by Asp-42, Asn-44, Asp-46, and Asp-53.

In terms of assembly, myosin is a hexamer of 2 heavy chains and 4 light chains. Phosphorylation increases the actin-activated myosin ATPase activity and thereby regulates the contractile activity.

Its function is as follows. Myosin regulatory subunit that plays an important role in regulation of both smooth muscle and nonmuscle cell contractile activity via its phosphorylation. Implicated in cytokinesis, receptor capping, and cell locomotion. The polypeptide is Myosin regulatory light chain RLC-A (Rlc-a) (Rattus norvegicus (Rat)).